The primary structure comprises 151 residues: Large ribosomal subunit protein uL13 (151 aa).

It belongs to the universal ribosomal protein uL13 family. As to quaternary structure, part of the 50S ribosomal subunit.

Functionally, this protein is one of the early assembly proteins of the 50S ribosomal subunit, although it is not seen to bind rRNA by itself. It is important during the early stages of 50S assembly. The sequence is that of Large ribosomal subunit protein uL13 from Synechocystis sp. (strain ATCC 27184 / PCC 6803 / Kazusa).